Reading from the N-terminus, the 448-residue chain is MSPLECSECFGDQLLHRTYTWQLTLHSRPNFTRKRDTRSESLEIPINVVLPQRGTAEPFPRLHNLHSIPRCAQQAALPRLSRRMASQHSYPLNRFSSVPLDPMERPMSQADLELDYNPPRVQLSDEMFVFQDGRWVNENCRLQSPYFSPSASFHHKLHHKRLAKEFVLQEENKSLREENKALREENRMLRKENKILQVFWEEHKASLGREESRPPSPLPQKDSASLEVVKKDHVALQVPRGKEDSTLQLLREENRALQQLLEQKQAYWTQTEDAAAPAEESKPAPSPHEEPCSPGLLQDQGSGLSSHFEEPRGPPAPQEDSKTLRALREMVSNMSGPSGEEEAKAGPGLPDGCQPLQLLREMRQALQALLKENRLLQEENRTLQVLRAEHRGFQEENKALWENNKLKLQQKLVIDTVTEVTARMEMLIEELYAFMPGRSQDPKKPSRV.

Phosphoserine is present on residues serine 41, serine 86, serine 89, serine 97, serine 124, serine 144, serine 148, and serine 150. Residues 163-198 are a coiled coil; it reads AKEFVLQEENKSLREENKALREENRMLRKENKILQV. A disordered region spans residues 206–226; that stretch reads SLGREESRPPSPLPQKDSASL. 2 positions are modified to phosphoserine: serine 212 and serine 225. Positions 242–267 form a coiled coil; sequence KEDSTLQLLREENRALQQLLEQKQAY. The interval 270–321 is disordered; sequence QTEDAAAPAEESKPAPSPHEEPCSPGLLQDQGSGLSSHFEEPRGPPAPQEDS. The span at 279–291 shows a compositional bias: basic and acidic residues; the sequence is EESKPAPSPHEEP. A phosphoserine mark is found at serine 335 and serine 338. Residues 356–414 are a coiled coil; it reads LQLLREMRQALQALLKENRLLQEENRTLQVLRAEHRGFQEENKALWENNKLKLQQKLVI.

This sequence belongs to the chibby family. SPERT subfamily. In terms of assembly, homodimer. Binds to NEK1.

This Macaca fascicularis (Crab-eating macaque) protein is Protein chibby homolog 2 (CBY2).